The sequence spans 449 residues: Tubulin beta chain (449 aa).

The GTP site is built by Gln11, Glu69, Ser138, Gly142, Thr143, Gly144, Asn204, and Asn226. Glu69 is a Mg(2+) binding site. The tract at residues 426–449 is disordered; that stretch reads QDATAEEEGEFDEEEGVMDAEGAA. Over residues 429-443 the composition is skewed to acidic residues; sequence TAEEEGEFDEEEGVM.

The protein belongs to the tubulin family. As to quaternary structure, dimer of alpha and beta chains. A typical microtubule is a hollow water-filled tube with an outer diameter of 25 nm and an inner diameter of 15 nM. Alpha-beta heterodimers associate head-to-tail to form protofilaments running lengthwise along the microtubule wall with the beta-tubulin subunit facing the microtubule plus end conferring a structural polarity. Microtubules usually have 13 protofilaments but different protofilament numbers can be found in some organisms and specialized cells. Requires Mg(2+) as cofactor.

It is found in the cytoplasm. Its subcellular location is the cytoskeleton. Functionally, tubulin is the major constituent of microtubules, a cylinder consisting of laterally associated linear protofilaments composed of alpha- and beta-tubulin heterodimers. Microtubules grow by the addition of GTP-tubulin dimers to the microtubule end, where a stabilizing cap forms. Below the cap, tubulin dimers are in GDP-bound state, owing to GTPase activity of alpha-tubulin. The protein is Tubulin beta chain of Eimeria tenella (Coccidian parasite).